A 256-amino-acid polypeptide reads, in one-letter code: Pimeloyl-[acyl-carrier protein] methyl ester esterase (256 aa).

Residues 15–242 enclose the AB hydrolase-1 domain; the sequence is HLVLLHGWGL…AAHAPFISHP (228 aa). Substrate contacts are provided by residues tryptophan 22, 82–83, and 143–147; these read SL and FLALQ. Serine 82 acts as the Nucleophile in catalysis. Active-site residues include aspartate 207 and histidine 235. Histidine 235 is a substrate binding site.

It belongs to the AB hydrolase superfamily. Carboxylesterase BioH family. In terms of assembly, monomer.

The protein localises to the cytoplasm. The enzyme catalyses 6-carboxyhexanoyl-[ACP] methyl ester + H2O = 6-carboxyhexanoyl-[ACP] + methanol + H(+). It participates in cofactor biosynthesis; biotin biosynthesis. The physiological role of BioH is to remove the methyl group introduced by BioC when the pimeloyl moiety is complete. It allows to synthesize pimeloyl-ACP via the fatty acid synthetic pathway through the hydrolysis of the ester bonds of pimeloyl-ACP esters. In Salmonella agona (strain SL483), this protein is Pimeloyl-[acyl-carrier protein] methyl ester esterase.